A 564-amino-acid polypeptide reads, in one-letter code: NAD-dependent malic enzyme (564 aa).

Tyr102 serves as the catalytic Proton donor. Arg155 provides a ligand contact to NAD(+). Catalysis depends on Lys173, which acts as the Proton acceptor. The a divalent metal cation site is built by Glu244, Asp245, and Asp268. NAD(+)-binding residues include Asp268 and Asn417.

This sequence belongs to the malic enzymes family. In terms of assembly, homotetramer. Requires Mg(2+) as cofactor. The cofactor is Mn(2+).

It catalyses the reaction (S)-malate + NAD(+) = pyruvate + CO2 + NADH. It carries out the reaction oxaloacetate + H(+) = pyruvate + CO2. The chain is NAD-dependent malic enzyme from Pseudomonas aeruginosa (strain LESB58).